We begin with the raw amino-acid sequence, 466 residues long: Adenosylhomocysteinase (466 aa).

Positions 57, 132, and 192 each coordinate substrate. Residue 193-195 (TTT) participates in NAD(+) binding. Residues K222 and D226 each coordinate substrate. NAD(+) is bound by residues N227, 256 to 261 (GYGDVG), E279, N314, 335 to 337 (IGH), and N380.

It belongs to the adenosylhomocysteinase family. It depends on NAD(+) as a cofactor.

The protein localises to the cytoplasm. The catalysed reaction is S-adenosyl-L-homocysteine + H2O = L-homocysteine + adenosine. The protein operates within amino-acid biosynthesis; L-homocysteine biosynthesis; L-homocysteine from S-adenosyl-L-homocysteine: step 1/1. Its function is as follows. May play a key role in the regulation of the intracellular concentration of adenosylhomocysteine. This chain is Adenosylhomocysteinase, found in Chromobacterium violaceum (strain ATCC 12472 / DSM 30191 / JCM 1249 / CCUG 213 / NBRC 12614 / NCIMB 9131 / NCTC 9757 / MK).